An 853-amino-acid polypeptide reads, in one-letter code: DNA (cytosine-5)-methyltransferase 3B (853 aa).

Basic and acidic residues predominate over residues 1–20; sequence MKGDTRHLNGEEDAGGREDS. A disordered region spans residues 1-218; sequence MKGDTRHLNG…SGDGDSSEYQ (218 aa). Residues 1–298 form an interaction with DNMT1 and DNMT3A region; it reads MKGDTRHLNG…LATFNKLVSY (298 aa). Residues 72-81 are compositionally biased toward acidic residues; that stretch reads GDGDGEDGDG. Ser82 carries the post-translational modification Phosphoserine. Residue Lys89 forms a Glycyl lysine isopeptide (Lys-Gly) (interchain with G-Cter in SUMO2) linkage. Thr96 carries the post-translational modification Phosphothreonine. Residues Ser100 and Ser110 each carry the phosphoserine modification. A compositionally biased stretch (basic residues) spans 115–130; sequence ERHRPSPRSTRGRQGR. Residues Ser136, Ser195, Ser202, and Ser209 each carry the phosphoserine modification. The segment covering 179 to 199 has biased composition (polar residues); that stretch reads GTPQSSSTPYARLAQDSQQGG. The PWWP domain occupies 225–283; the sequence is IGDLVWGKIKGFSWWPAMVVSWKATSKRQAMSGMRWVQWFGDGKFSEVSADKLVALGLF. The tract at residues 341-423 is disordered; that stretch reads KPTGIEGLKP…DQSREQMASD (83 aa). Composition is skewed to basic and acidic residues over residues 368 to 385 and 407 to 417; these read RKLESRKYENKTRRRTAD and GKDRGDEDQSR. Arg410 is modified (citrulline). The region spanning 423 to 555 is the ADD domain; it reads DVANNKSSLE…LQAFFTSDTG (133 aa). A GATA-type; atypical zinc finger spans residues 434 to 464; that stretch reads GCLSCGRKNPVSFHPLFEGGLCQTCRDRFLE. The interval 435–527 is interaction with the PRC2/EED-EZH2 complex; sequence CLSCGRKNPV…LQEPWSCYMC (93 aa). Residues 475–531 form a PHD-type; atypical zinc finger; it reads QSYCTVCCEGRELLLCSNTSCCRCFCVECLEVLVGTGTAAEAKLQEPWSCYMCLPQR. Residues 575–853 form the SAM-dependent MTase C5-type domain; sequence IRVLSLFDGI…APLKDYFACE (279 aa). Residues 582-586 and Glu605 contribute to the S-adenosyl-L-methionine site; that span reads DGIAT. Residue Lys617 forms a Glycyl lysine isopeptide (Lys-Gly) (interchain with G-Cter in SUMO2) linkage. 627 to 629 is a binding site for S-adenosyl-L-methionine; that stretch reads DVR. Cys651 is an active-site residue. An S-adenosyl-L-methionine-binding site is contributed by 832 to 834; that stretch reads RSW.

This sequence belongs to the class I-like SAM-binding methyltransferase superfamily. C5-methyltransferase family. Interacts with BAZ2A/TIP5, SUV39H1 and CBX4. Interacts with UHRF1. Interacts with DNMT1 and DNMT3A, SETDB1, UBL1, UBE2I9 and ZHX1. Interacts with the PRC2/EED-EZH2 complex. Sumoylated. Post-translationally, citrullinated by PADI4. As to expression, ubiquitous; highly expressed in fetal liver, heart, kidney, placenta, and at lower levels in spleen, colon, brain, liver, small intestine, lung, peripheral blood mononuclear cells, and skeletal muscle. Isoform 1 is expressed in all tissues except brain, skeletal muscle and PBMC, 3 is ubiquitous, 4 is expressed in all tissues except brain, skeletal muscle, lung and prostate and 5 is detectable only in testis and at very low level in brain and prostate.

Its subcellular location is the nucleus. It carries out the reaction a 2'-deoxycytidine in DNA + S-adenosyl-L-methionine = a 5-methyl-2'-deoxycytidine in DNA + S-adenosyl-L-homocysteine + H(+). Activated by binding to the regulatory factor DNMT3L. Functionally, required for genome-wide de novo methylation and is essential for the establishment of DNA methylation patterns during development. DNA methylation is coordinated with methylation of histones. May preferentially methylates nucleosomal DNA within the nucleosome core region. May function as transcriptional co-repressor by associating with CBX4 and independently of DNA methylation. Seems to be involved in gene silencing. In association with DNMT1 and via the recruitment of CTCFL/BORIS, involved in activation of BAG1 gene expression by modulating dimethylation of promoter histone H3 at H3K4 and H3K9. Isoforms 4 and 5 are probably not functional due to the deletion of two conserved methyltransferase motifs. Functions as a transcriptional corepressor by associating with ZHX1. Required for DUX4 silencing in somatic cells. The protein is DNA (cytosine-5)-methyltransferase 3B (DNMT3B) of Homo sapiens (Human).